An 87-amino-acid chain; its full sequence is Phosphocarrier protein HPr (87 aa).

Residues 1–87 enclose the HPr domain; that stretch reads MAEKTFTITA…EEVIKEGLGE (87 aa). H15 serves as the catalytic Pros-phosphohistidine intermediate. At S46 the chain carries Phosphoserine; by HPrK/P.

This sequence belongs to the HPr family.

The protein localises to the cytoplasm. With respect to regulation, phosphorylation on Ser-46 inhibits the phosphoryl transfer from enzyme I to HPr. Its function is as follows. General (non sugar-specific) component of the phosphoenolpyruvate-dependent sugar phosphotransferase system (sugar PTS). This major carbohydrate active-transport system catalyzes the phosphorylation of incoming sugar substrates concomitantly with their translocation across the cell membrane. The phosphoryl group from phosphoenolpyruvate (PEP) is transferred to the phosphoryl carrier protein HPr by enzyme I. Phospho-HPr then transfers it to the PTS EIIA domain. Functionally, P-Ser-HPr interacts with the catabolite control protein A (CcpA), forming a complex that binds to DNA at the catabolite response elements cre, operator sites preceding a large number of catabolite-regulated genes. Thus, P-Ser-HPr is a corepressor in carbon catabolite repression (CCR), a mechanism that allows bacteria to coordinate and optimize the utilization of available carbon sources. P-Ser-HPr also plays a role in inducer exclusion, in which it probably interacts with several non-PTS permeases and inhibits their transport activity. The sequence is that of Phosphocarrier protein HPr (ptsH) from Halalkalibacterium halodurans (strain ATCC BAA-125 / DSM 18197 / FERM 7344 / JCM 9153 / C-125) (Bacillus halodurans).